A 274-amino-acid polypeptide reads, in one-letter code: Putative phosphoenolpyruvate synthase regulatory protein (274 aa).

157–164 is a binding site for ADP; it reads GVSRCGKT.

This sequence belongs to the pyruvate, phosphate/water dikinase regulatory protein family. PSRP subfamily.

It carries out the reaction [pyruvate, water dikinase] + ADP = [pyruvate, water dikinase]-phosphate + AMP + H(+). The catalysed reaction is [pyruvate, water dikinase]-phosphate + phosphate + H(+) = [pyruvate, water dikinase] + diphosphate. Functionally, bifunctional serine/threonine kinase and phosphorylase involved in the regulation of the phosphoenolpyruvate synthase (PEPS) by catalyzing its phosphorylation/dephosphorylation. The protein is Putative phosphoenolpyruvate synthase regulatory protein of Bordetella avium (strain 197N).